The following is a 420-amino-acid chain: Tyrosine--tRNA ligase (420 aa).

Y38 contributes to the L-tyrosine binding site. Residues 43–52 carry the 'HIGH' region motif; it reads PTGDSLHIGH. Positions 169 and 173 each coordinate L-tyrosine. A 'KMSKS' region motif is present at residues 231–235; the sequence is KFGKS. K234 serves as a coordination point for ATP. Positions 353–419 constitute an S4 RNA-binding domain; sequence KNIVEFLVET…GKRKYTLVKI (67 aa).

It belongs to the class-I aminoacyl-tRNA synthetase family. TyrS type 1 subfamily. Homodimer.

The protein resides in the cytoplasm. It carries out the reaction tRNA(Tyr) + L-tyrosine + ATP = L-tyrosyl-tRNA(Tyr) + AMP + diphosphate + H(+). In terms of biological role, catalyzes the attachment of tyrosine to tRNA(Tyr) in a two-step reaction: tyrosine is first activated by ATP to form Tyr-AMP and then transferred to the acceptor end of tRNA(Tyr). The polypeptide is Tyrosine--tRNA ligase (Lactobacillus johnsonii (strain CNCM I-12250 / La1 / NCC 533)).